Reading from the N-terminus, the 236-residue chain is Large ribosomal subunit protein uL1 (236 aa).

Belongs to the universal ribosomal protein uL1 family. In terms of assembly, part of the 50S ribosomal subunit.

Its function is as follows. Binds directly to 23S rRNA. The L1 stalk is quite mobile in the ribosome, and is involved in E site tRNA release. Protein L1 is also a translational repressor protein, it controls the translation of the L11 operon by binding to its mRNA. The sequence is that of Large ribosomal subunit protein uL1 from Acidobacterium capsulatum (strain ATCC 51196 / DSM 11244 / BCRC 80197 / JCM 7670 / NBRC 15755 / NCIMB 13165 / 161).